Consider the following 302-residue polypeptide: Methionyl-tRNA formyltransferase (302 aa).

107 to 110 (SDLP) serves as a coordination point for (6S)-5,6,7,8-tetrahydrofolate.

Belongs to the Fmt family.

The enzyme catalyses L-methionyl-tRNA(fMet) + (6R)-10-formyltetrahydrofolate = N-formyl-L-methionyl-tRNA(fMet) + (6S)-5,6,7,8-tetrahydrofolate + H(+). Its function is as follows. Attaches a formyl group to the free amino group of methionyl-tRNA(fMet). The formyl group appears to play a dual role in the initiator identity of N-formylmethionyl-tRNA by promoting its recognition by IF2 and preventing the misappropriation of this tRNA by the elongation apparatus. This chain is Methionyl-tRNA formyltransferase, found in Rickettsia massiliae (strain Mtu5).